The sequence spans 588 residues: Serine/threonine-protein phosphatase 2A 65 kDa regulatory subunit A alpha isoform (588 aa).

HEAT repeat units follow at residues 2–42 (AMVD…ALGE), 44–80 (RTRK…FVGG), 81–119 (IEFA…QMKE), 158–196 (DVLK…TVES), 197–235 (TFLI…LLEP), 236–274 (QDCV…AVGP), 275–313 (DCTR…LLNP), 315–352 (LAIQ…ILGK), 353–391 (DSTI…VIGI), 393–430 (LLSQ…QLGI), 432–469 (FFDD…EFGP), 470–508 (EWAM…VMGS), 509–547 (EITC…IVDQ), and 549–586 (VVDK…STAA).

This sequence belongs to the phosphatase 2A regulatory subunit A family. PP2A consists of a common heterodimeric core enzyme, composed of a 36 kDa catalytic subunit (subunit C) and a 65 kDa constant regulatory subunit (subunit A), that associates with a variety of regulatory subunits such as subunits B (the R2/B/PR55/B55, R3/B''/PR72/PR130/PR59 and R5/B'/B56 families) and the regulatory subunits TON2. Interacts with CYP20-1/ROC7. Also interacts with phosphatidic acid (PA), a lipid signaling molecule. Interacts with CHIP. Interacts with SIC/RON3. Post-translationally, ubiquitinated. CHIP-mediated ubiquitination enhances phosphatase activity after an abiotic stress such as low temperature or darkness. Mostly expressed in cell-dividing tissues such as apical meristems. Ubiquitous, with higher levels in roots and flowers (at protein level).

Its subcellular location is the cytoplasm. The protein localises to the cytosol. The protein resides in the nucleus. Functionally, the A subunit of protein phosphatase 2A serves as a scaffolding molecule to coordinate the assembly of the catalytic subunit and a variable regulatory B subunit. Seems to act as a positive regulator of PP2A catalytic activity. Confers resistance to phosphatase inhibitors such as okadaic acid and cantharidin. Involved during developmental process such as seedling and floral developments, root gravitropism, and stomatal opening regulation. Involved in the regulation of auxin efflux, especially during basipetal (tips to base) auxin transport in roots, and appears to contribute to the perception of auxin efflux inhibitors such as 1-N-naphthylphthalamic acid (NPA) and to semicarbazone I (substituted phenylsemicarbazone of 2-acetylarylcarboxylic acids) (SCB-I). Modulates the magnitude of ethylene response in the hypocotyl and stem, and functions as a general positive transducer of early ABA signaling. The holoenzyme composed of PP2AA1, PP2A4 and B'ZETA or B'ETA acts as a negative regulator of plant innate immunity by controlling BAK1 phosphorylation state and activation in surface-localized immune receptor complexes. In Arabidopsis thaliana (Mouse-ear cress), this protein is Serine/threonine-protein phosphatase 2A 65 kDa regulatory subunit A alpha isoform (PP2AA1).